A 185-amino-acid chain; its full sequence is Ribosome-recycling factor (185 aa).

Positions 138–157 (ELKKLEKDHTASEDEVKRAQ) are disordered.

Belongs to the RRF family.

The protein resides in the cytoplasm. Functionally, responsible for the release of ribosomes from messenger RNA at the termination of protein biosynthesis. May increase the efficiency of translation by recycling ribosomes from one round of translation to another. This chain is Ribosome-recycling factor, found in Desulfitobacterium hafniense (strain DSM 10664 / DCB-2).